We begin with the raw amino-acid sequence, 101 residues long: Large ribosomal subunit protein P1 (101 aa).

The tract at residues 65–89 (AAPAAAPAEEPKEEKKEEKKEEDTT) is disordered. Positions 73-87 (EEPKEEKKEEKKEED) are enriched in basic and acidic residues.

It belongs to the eukaryotic ribosomal protein P1/P2 family. As to quaternary structure, part of the 50S ribosomal subunit. Homodimer, it forms part of the ribosomal stalk which helps the ribosome interact with GTP-bound translation factors. Forms a heptameric uL10/P0(P1)2(P1)2(P1)2 complex, where uL10/P0 forms an elongated spine to which the P1 dimers bind in a sequential fashion.

Forms part of the ribosomal stalk, playing a central role in the interaction of the ribosome with GTP-bound translation factors. This chain is Large ribosomal subunit protein P1, found in Methanothermococcus thermolithotrophicus (Methanococcus thermolithotrophicus).